A 29-amino-acid polypeptide reads, in one-letter code: Cytochrome b6-f complex subunit 8 (29 aa).

Residues 3 to 23 form a helical membrane-spanning segment; that stretch reads IISIGWVSLMVVFTFSISLVV.

It belongs to the PetN family. The 4 large subunits of the cytochrome b6-f complex are cytochrome b6, subunit IV (17 kDa polypeptide, PetD), cytochrome f and the Rieske protein, while the 4 small subunits are PetG, PetL, PetM and PetN. The complex functions as a dimer.

It localises to the plastid. Its subcellular location is the chloroplast thylakoid membrane. Its function is as follows. Component of the cytochrome b6-f complex, which mediates electron transfer between photosystem II (PSII) and photosystem I (PSI), cyclic electron flow around PSI, and state transitions. This chain is Cytochrome b6-f complex subunit 8, found in Staurastrum punctulatum (Green alga).